The sequence spans 345 residues: Platelet-derived growth factor C (345 aa).

A signal peptide spans 1 to 22 (MSLFGLLLLTSALAGQRQGTQA). 2 N-linked (GlcNAc...) asparagine glycosylation sites follow: Asn25 and Asn55. One can recognise a CUB domain in the interval 46-163 (HERIITVSTN…PGFCIHYNIV (118 aa)). 4 cysteine pairs are disulfide-bonded: Cys104–Cys124, Cys250–Cys294, Cys280–Cys335, and Cys287–Cys337.

Belongs to the PDGF/VEGF growth factor family. Homodimer; disulfide-linked. Interacts with PDGFRA homodimers, and with heterodimers formed by PDGFRA and PDGFRB. Interacts (via CUB domain) with PLAT (via kringle domain). Post-translationally, proteolytic removal of the N-terminal CUB domain releasing the core domain is necessary for unmasking the receptor-binding epitopes of the core domain. Cleavage after basic residues in the hinge region (region connecting the CUB and growth factor domains) gives rise to the receptor-binding form. Cleaved by PLAT and PLG. In terms of processing, sumoylated with SUMO1. N-glycosylated. In terms of tissue distribution, expressed in the fallopian tube, vascular smooth muscle cells in kidney, breast and colon and in visceral smooth muscle of the gastrointestinal tract. Highly expressed in retinal pigment epithelia. Expressed in medulloblastoma. In the kidney, constitutively expressed in parietal epithelial cells of Bowman's capsule, tubular epithelial cells and in arterial endothelial cells (at protein level). Highly expressed in the platelets, prostate, testis and uterus. Higher expression is observed in uterine leiomyomata. Weaker expression in the spleen, thymus, heart, pancreas, liver, ovary cells and small intestine, and negligible expression in the colon and peripheral blood leukocytes.

It is found in the cytoplasm. The protein resides in the cytosol. It localises to the secreted. The protein localises to the nucleus. Its subcellular location is the cytoplasmic granule. It is found in the cell membrane. Growth factor that plays an essential role in the regulation of embryonic development, cell proliferation, cell migration, survival and chemotaxis. Potent mitogen and chemoattractant for cells of mesenchymal origin. Required for normal skeleton formation during embryonic development, especially for normal development of the craniofacial skeleton and for normal development of the palate. Required for normal skin morphogenesis during embryonic development. Plays an important role in wound healing, where it appears to be involved in three stages: inflammation, proliferation and remodeling. Plays an important role in angiogenesis and blood vessel development. Involved in fibrotic processes, in which transformation of interstitial fibroblasts into myofibroblasts plus collagen deposition occurs. The CUB domain has mitogenic activity in coronary artery smooth muscle cells, suggesting a role beyond the maintenance of the latency of the PDGF domain. In the nucleus, PDGFC seems to have additional function. The polypeptide is Platelet-derived growth factor C (PDGFC) (Homo sapiens (Human)).